We begin with the raw amino-acid sequence, 252 residues long: Adenosylcobinamide-GDP ribazoletransferase (252 aa).

Helical transmembrane passes span 33–53 (FISP…VVLL), 105–125 (TGSG…IATL), 132–152 (LWFF…LLGL), 184–204 (FAIL…LLVF), and 215–235 (MSGD…LLVA).

This sequence belongs to the CobS family. It depends on Mg(2+) as a cofactor.

The protein localises to the cell membrane. The catalysed reaction is alpha-ribazole + adenosylcob(III)inamide-GDP = adenosylcob(III)alamin + GMP + H(+). It catalyses the reaction alpha-ribazole 5'-phosphate + adenosylcob(III)inamide-GDP = adenosylcob(III)alamin 5'-phosphate + GMP + H(+). It participates in cofactor biosynthesis; adenosylcobalamin biosynthesis; adenosylcobalamin from cob(II)yrinate a,c-diamide: step 7/7. In terms of biological role, joins adenosylcobinamide-GDP and alpha-ribazole to generate adenosylcobalamin (Ado-cobalamin). Also synthesizes adenosylcobalamin 5'-phosphate from adenosylcobinamide-GDP and alpha-ribazole 5'-phosphate. In Sulfolobus acidocaldarius (strain ATCC 33909 / DSM 639 / JCM 8929 / NBRC 15157 / NCIMB 11770), this protein is Adenosylcobinamide-GDP ribazoletransferase.